The following is an 844-amino-acid chain: Beta-mannosidase B (844 aa).

Glu432 serves as the catalytic Proton donor. Asn723 carries N-linked (GlcNAc...) asparagine glycosylation.

The protein belongs to the glycosyl hydrolase 2 family. Beta-mannosidase B subfamily.

The enzyme catalyses Hydrolysis of terminal, non-reducing beta-D-mannose residues in beta-D-mannosides.. It participates in glycan metabolism; N-glycan degradation. In terms of biological role, exoglycosidase that cleaves the single beta-linked mannose residue from the non-reducing end of beta-mannosidic oligosaccharides of various complexity and length. Prefers mannobiose over mannotriose and has no activity against polymeric mannan. Is also severely restricted by galactosyl substitutions at the +1 subsite. This Aspergillus niger (strain ATCC MYA-4892 / CBS 513.88 / FGSC A1513) protein is Beta-mannosidase B (mndB).